The sequence spans 213 residues: Thiamine-phosphate synthase (213 aa).

4-amino-2-methyl-5-(diphosphooxymethyl)pyrimidine-binding positions include 40-44 (QFREK) and Asn75. Asp76 and Asp95 together coordinate Mg(2+). Ser113 contacts 4-amino-2-methyl-5-(diphosphooxymethyl)pyrimidine. 139–141 (TPS) is a 2-[(2R,5Z)-2-carboxy-4-methylthiazol-5(2H)-ylidene]ethyl phosphate binding site. Lys142 contributes to the 4-amino-2-methyl-5-(diphosphooxymethyl)pyrimidine binding site. Residues Gly171 and 191 to 192 (IS) each bind 2-[(2R,5Z)-2-carboxy-4-methylthiazol-5(2H)-ylidene]ethyl phosphate.

Belongs to the thiamine-phosphate synthase family. It depends on Mg(2+) as a cofactor.

It carries out the reaction 2-[(2R,5Z)-2-carboxy-4-methylthiazol-5(2H)-ylidene]ethyl phosphate + 4-amino-2-methyl-5-(diphosphooxymethyl)pyrimidine + 2 H(+) = thiamine phosphate + CO2 + diphosphate. The enzyme catalyses 2-(2-carboxy-4-methylthiazol-5-yl)ethyl phosphate + 4-amino-2-methyl-5-(diphosphooxymethyl)pyrimidine + 2 H(+) = thiamine phosphate + CO2 + diphosphate. The catalysed reaction is 4-methyl-5-(2-phosphooxyethyl)-thiazole + 4-amino-2-methyl-5-(diphosphooxymethyl)pyrimidine + H(+) = thiamine phosphate + diphosphate. The protein operates within cofactor biosynthesis; thiamine diphosphate biosynthesis; thiamine phosphate from 4-amino-2-methyl-5-diphosphomethylpyrimidine and 4-methyl-5-(2-phosphoethyl)-thiazole: step 1/1. Its function is as follows. Condenses 4-methyl-5-(beta-hydroxyethyl)thiazole monophosphate (THZ-P) and 2-methyl-4-amino-5-hydroxymethyl pyrimidine pyrophosphate (HMP-PP) to form thiamine monophosphate (TMP). The polypeptide is Thiamine-phosphate synthase (Staphylococcus aureus (strain bovine RF122 / ET3-1)).